Reading from the N-terminus, the 210-residue chain is Beta-crystallin A4 (210 aa).

The N-terminal arm stretch occupies residues 1-25 (MSGMFSGSISETSGMSLQCTKSAGH). Beta/gamma crystallin 'Greek key' domains are found at residues 26–65 (WKIVVWDEEGFQGRRHEFTAECPSVLELGFETVRSLKVLS) and 66–112 (GAWV…RPVA). The connecting peptide stretch occupies residues 113–118 (CANHRD). Beta/gamma crystallin 'Greek key' domains follow at residues 119 to 160 (SRLT…HVHS) and 161 to 209 (GAWV…RRIQ).

This sequence belongs to the beta/gamma-crystallin family. Homo/heterodimer, or complexes of higher-order. The structure of beta-crystallin oligomers seems to be stabilized through interactions between the N-terminal arms.

Functionally, crystallins are the dominant structural components of the vertebrate eye lens. This chain is Beta-crystallin A4 (CRYBA4), found in Bos taurus (Bovine).